The following is a 623-amino-acid chain: Chaperone protein DnaK (623 aa).

Residue T174 is modified to Phosphothreonine; by autocatalysis. 2 disordered regions span residues 470–504 (ITIK…KEEV) and 578–623 (GGAQ…DPDK). Residues 481–504 (EEIKKMQKDAEEHAEEDKKRKEEV) show a composition bias toward basic and acidic residues. Residues 578–604 (GGAQGAAGQAGPQGAQGGQPNNDNGSS) are compositionally biased toward low complexity. The segment covering 614–623 (GDFHKVDPDK) has biased composition (basic and acidic residues).

Belongs to the heat shock protein 70 family.

In terms of biological role, acts as a chaperone. The sequence is that of Chaperone protein DnaK from Lactobacillus gasseri (strain ATCC 33323 / DSM 20243 / BCRC 14619 / CIP 102991 / JCM 1131 / KCTC 3163 / NCIMB 11718 / NCTC 13722 / AM63).